The sequence spans 195 residues: UPF0215 protein TK2033 (195 aa).

It belongs to the UPF0215 family.

This is UPF0215 protein TK2033 from Thermococcus kodakarensis (strain ATCC BAA-918 / JCM 12380 / KOD1) (Pyrococcus kodakaraensis (strain KOD1)).